The chain runs to 61 residues: Bacteriocin leucocin-A (61 aa).

Residues 1 to 24 constitute a propeptide that is removed on maturation; the sequence is MMNMKPTESYEQLDNSALEQVVGG. C33 and C38 are oxidised to a cystine.

This sequence belongs to the bacteriocin class IIA/YGNGV family.

The protein resides in the secreted. Its function is as follows. Inhibits a wide spectrum of lactic acid bacteria. The polypeptide is Bacteriocin leucocin-A (lcnA) (Leuconostoc gelidum).